Reading from the N-terminus, the 1661-residue chain is Cortactin-binding protein 2 (1661 aa).

Disordered regions lie at residues 1–27, 206–226, 329–438, 454–477, and 493–612; these read MATDGASCEPDFSRASEDAAEATAEAT, EKKRTNELEEELSTEKRRSTE, TVPV…SLHP, NANDQDQNGNTTQSPPSRDVSPTS, and QALS…LPPK. Residues 124–280 are a coiled coil; the sequence is KMQERMSTQL…EQLKRGNDSK (157 aa). Positions 383 to 394 are enriched in low complexity; it reads GPSTGSTPDLPS. The span at 412–426 shows a compositional bias: polar residues; it reads SIASQNYSQASSLHS. Residues 454-466 show a composition bias toward low complexity; sequence NANDQDQNGNTTQ. Residues 467–477 are compositionally biased toward polar residues; the sequence is SPPSRDVSPTS. An Asymmetric dimethylarginine modification is found at R497. ANK repeat units lie at residues 707–737, 741–770, 774–803, 807–836, and 840–869; these read GRPTLLQQAAAQGNVTLLSMLLNEEGLDINY, DGHSALYSAAKNGHTDCVRLLLNAEAQVNA, NGFTPLCAAAAQGHDKCVELLIAYRANINH, GGQTPLYLACKNGNKECIKLLLEAGTDRSV, and DGWTPVHAAVDTGNVDSLKLLMYHRAPACG. Residues 876 to 896 form a disordered region; it reads EPESDVFDLDGGGERPEGTVK. The stretch at 910 to 940 is one ANK 6 repeat; it reads EGWTAAHIAASKGFKNCLEILCQHGGLEPER. The interval 1444–1480 is disordered; that stretch reads GKKKGENGAWRKVSTSPRKKSGRFPSPTWSKPDLSDE. S1522 carries the post-translational modification Phosphoserine. 2 disordered regions span residues 1555 to 1597 and 1614 to 1661; these read RRFD…SNSK and PRSK…KPNK. Positions 1580–1597 are enriched in polar residues; it reads KEVSPLSSHQTTECSNSK. A compositionally biased stretch (low complexity) spans 1622-1636; the sequence is SQNTRRSSSSSNTRQ. Basic and acidic residues predominate over residues 1643–1661; it reads SKDEIWNLRKNEQVEKPNK.

Interacts with CTTN/cortactin SH3 domain. Interacts with STRN, STRN4/zinedin and MOB4/phocein; this interactions mediate the association with the STRIPAK core complex and may regulate dendritic spine distribution of the STRIPAK complex in hippocampal neurons. Activation of glutamate receptors weakens the interaction with STRN and STRN4.

The protein localises to the cytoplasm. Its subcellular location is the cell cortex. It localises to the cell projection. It is found in the dendritic spine. In terms of biological role, regulates the dendritic spine distribution of CTTN/cortactin in hippocampal neurons, and thus controls dendritic spinogenesis and dendritic spine maintenance. Associates with the striatin-interacting phosphatase and kinase (STRIPAK) core complex to regulate dendritic spine distribution of the STRIPAK complex in hippocampal neurons. In Loxodonta africana (African elephant), this protein is Cortactin-binding protein 2 (CTTNBP2).